The chain runs to 616 residues: MPPYRSRTTTHGRNMAGARGLWRATGMKDGDFGKPIIAVANSFTQFVPGHVHLKDLGQLVAREIEAAGGVAKEFNTIAVDDGIAMGHDGMLYSLPSREIIADSVEYMVNAHCADAIVCISNCDKITPGMLMASLRLNIPVVFVSGGPMEAGKVLLGGKTKALDLVDAMVAAADDKVSEADVAAIERSACPTCGSCSGMFTANSMNCLTEALGLALPGNGSMLATHGDRKRLFVEAGHLIVDLARRYYEQDDSSVLPRSIASFAAFENAMTLDISMGGSTNTVLHLLAAAHEGEIDFTMADIDRLSRRVPVLCKVAPAVADVHVEDVHRAGGVMAILGELERAGLIHGDLPVVHAPSLKEALERWDLRRTSSESVTEFFRAAPGGVPTQVAFSQNARWKETDVDRAGGVIRDVEHAFSKDGGLAVLYGNLAEDGAIVKTAGVDASILVFSGPARVFESQDAAVEAILANQIKPGDVLVIRYEGPRGGPGMQEMLYPTSYLKSKGLGKACALITDGRFSGGTSGLSIGHVSPEAAEGGLIGLVEEGDSIQIDIPNRRLHLDISDEALAHRRTAMAEKGKGAWKPAHRTRKVSTALRAYAAMATSAARGAVRDVDQLFH.

Residue aspartate 81 participates in Mg(2+) binding. Residue cysteine 122 coordinates [2Fe-2S] cluster. 2 residues coordinate Mg(2+): aspartate 123 and lysine 124. Lysine 124 is modified (N6-carboxylysine). Cysteine 195 provides a ligand contact to [2Fe-2S] cluster. Glutamate 491 provides a ligand contact to Mg(2+). Serine 517 acts as the Proton acceptor in catalysis.

This sequence belongs to the IlvD/Edd family. In terms of assembly, homodimer. The cofactor is [2Fe-2S] cluster. Mg(2+) is required as a cofactor.

The catalysed reaction is (2R)-2,3-dihydroxy-3-methylbutanoate = 3-methyl-2-oxobutanoate + H2O. It catalyses the reaction (2R,3R)-2,3-dihydroxy-3-methylpentanoate = (S)-3-methyl-2-oxopentanoate + H2O. It participates in amino-acid biosynthesis; L-isoleucine biosynthesis; L-isoleucine from 2-oxobutanoate: step 3/4. It functions in the pathway amino-acid biosynthesis; L-valine biosynthesis; L-valine from pyruvate: step 3/4. Functionally, functions in the biosynthesis of branched-chain amino acids. Catalyzes the dehydration of (2R,3R)-2,3-dihydroxy-3-methylpentanoate (2,3-dihydroxy-3-methylvalerate) into 2-oxo-3-methylpentanoate (2-oxo-3-methylvalerate) and of (2R)-2,3-dihydroxy-3-methylbutanoate (2,3-dihydroxyisovalerate) into 2-oxo-3-methylbutanoate (2-oxoisovalerate), the penultimate precursor to L-isoleucine and L-valine, respectively. The polypeptide is Dihydroxy-acid dehydratase (Methylocella silvestris (strain DSM 15510 / CIP 108128 / LMG 27833 / NCIMB 13906 / BL2)).